The primary structure comprises 345 residues: Anthranilate phosphoribosyltransferase (345 aa).

5-phospho-alpha-D-ribose 1-diphosphate-binding positions include Gly-84, 87-88 (GD), Thr-92, 94-97 (NIST), 112-120 (KHGGRSVSS), and Ser-124. Residue Gly-84 participates in anthranilate binding. Residue Ser-96 participates in Mg(2+) binding. Arg-170 serves as a coordination point for anthranilate. Asp-229 and Glu-230 together coordinate Mg(2+).

This sequence belongs to the anthranilate phosphoribosyltransferase family. Homodimer. Requires Mg(2+) as cofactor.

The enzyme catalyses N-(5-phospho-beta-D-ribosyl)anthranilate + diphosphate = 5-phospho-alpha-D-ribose 1-diphosphate + anthranilate. It participates in amino-acid biosynthesis; L-tryptophan biosynthesis; L-tryptophan from chorismate: step 2/5. Functionally, catalyzes the transfer of the phosphoribosyl group of 5-phosphorylribose-1-pyrophosphate (PRPP) to anthranilate to yield N-(5'-phosphoribosyl)-anthranilate (PRA). The sequence is that of Anthranilate phosphoribosyltransferase from Herminiimonas arsenicoxydans.